Consider the following 193-residue polypeptide: Ion-translocating oxidoreductase complex subunit A (193 aa).

6 helical membrane passes run leucine 5–leucine 25, isoleucine 39–valine 59, phenylalanine 62–alanine 82, leucine 102–leucine 122, alanine 134–isoleucine 154, and serine 171–valine 191.

This sequence belongs to the NqrDE/RnfAE family. In terms of assembly, the complex is composed of six subunits: RnfA, RnfB, RnfC, RnfD, RnfE and RnfG.

It localises to the cell inner membrane. Functionally, part of a membrane-bound complex that couples electron transfer with translocation of ions across the membrane. The sequence is that of Ion-translocating oxidoreductase complex subunit A from Yersinia enterocolitica serotype O:8 / biotype 1B (strain NCTC 13174 / 8081).